The sequence spans 180 residues: Large ribosomal subunit protein uL10 (180 aa).

The disordered stretch occupies residues 161–180 (SKAEGSEETESNETTETVEE). Residues 166 to 180 (SEETESNETTETVEE) show a composition bias toward acidic residues.

It belongs to the universal ribosomal protein uL10 family. In terms of assembly, part of the ribosomal stalk of the 50S ribosomal subunit. The N-terminus interacts with L11 and the large rRNA to form the base of the stalk. The C-terminus forms an elongated spine to which L12 dimers bind in a sequential fashion forming a multimeric L10(L12)X complex.

Forms part of the ribosomal stalk, playing a central role in the interaction of the ribosome with GTP-bound translation factors. This chain is Large ribosomal subunit protein uL10, found in Finegoldia magna (strain ATCC 29328 / DSM 20472 / WAL 2508) (Peptostreptococcus magnus).